Consider the following 591-residue polypeptide: Autotransporter adhesin NhhA (591 aa).

The first 51 residues, 1–51 (MNKIYRIIWNSALNAWVVVSELTRNHTKRASATVKTAVLATLLFATVQASA), serve as a signal peptide directing secretion. The interval 52–503 (NNEEQEEDLY…TNVAQLKGVA (452 aa)) is surface exposed passenger domain. The translocator domain stretch occupies residues 504-591 (QNLNNRIDNV…GASASVGYQW (88 aa)). 4 consecutive transmembrane segments (beta stranded) span residues 537–547 (GKSMMAIGGGT), 551–561 (EAGYAIGYSSI), 570–576 (KGTASGN), and 580–591 (HFGASASVGYQW).

It belongs to the autotransporter-2 (AT-2) (TC 1.B.40) family. As to quaternary structure, homotrimer.

It is found in the cell surface. The protein localises to the cell outer membrane. Its function is as follows. Involved in adhesion of capsulated meningococci to host epithelial cells. Interacts with laminin and heparan sulfate, promoting the adherence to the extracellular matrix (ECM) components. This chain is Autotransporter adhesin NhhA, found in Neisseria meningitidis serogroup B (strain ATCC BAA-335 / MC58).